Here is a 331-residue protein sequence, read N- to C-terminus: Glycerol-3-phosphate dehydrogenase [NAD(P)+] (331 aa).

NADPH-binding residues include Trp11 and Lys101. 3 residues coordinate sn-glycerol 3-phosphate: Lys101, Gly132, and Ser134. Ala136 lines the NADPH pocket. Lys188, Asp241, Ser251, Arg252, and Asn253 together coordinate sn-glycerol 3-phosphate. Lys188 (proton acceptor) is an active-site residue. An NADPH-binding site is contributed by Arg252. Glu278 is a binding site for NADPH.

This sequence belongs to the NAD-dependent glycerol-3-phosphate dehydrogenase family.

The protein localises to the cytoplasm. It carries out the reaction sn-glycerol 3-phosphate + NAD(+) = dihydroxyacetone phosphate + NADH + H(+). The enzyme catalyses sn-glycerol 3-phosphate + NADP(+) = dihydroxyacetone phosphate + NADPH + H(+). It functions in the pathway membrane lipid metabolism; glycerophospholipid metabolism. Catalyzes the reduction of the glycolytic intermediate dihydroxyacetone phosphate (DHAP) to sn-glycerol 3-phosphate (G3P), the key precursor for phospholipid synthesis. This is Glycerol-3-phosphate dehydrogenase [NAD(P)+] from Phytoplasma mali (strain AT).